We begin with the raw amino-acid sequence, 469 residues long: uncharacterized protein (469 aa).

An HTH gntR-type domain is found at 13–81; it reads TPLYEQLYTF…PKIGWFAAEV (69 aa). The segment at residues 41–60 is a DNA-binding region (H-T-H motif); that stretch reads KRRLSSLLDVSTATIERAYE. The residue at position 309 (lysine 309) is an N6-(pyridoxal phosphate)lysine.

This sequence in the C-terminal section; belongs to the class-I pyridoxal-phosphate-dependent aminotransferase family. Pyridoxal 5'-phosphate is required as a cofactor.

This is an uncharacterized protein from Bacillus subtilis (strain 168).